Here is a 668-residue protein sequence, read N- to C-terminus: UvrABC system protein B (668 aa).

The 388-residue stretch at 36–423 (DNIKGGEKAQ…TETVVEQIIR (388 aa)) folds into the Helicase ATP-binding domain. 49 to 56 (GATGTGKT) is a binding site for ATP. Positions 102–125 (YYDYYQPEAYVPSSDTYIEKDSSI) match the Beta-hairpin motif. Positions 440–606 (QMDDLLGEIN…TIKKEIRDLI (167 aa)) constitute a Helicase C-terminal domain. Positions 632-667 (QEAIKKLQKQMHEAAELLDFELAAQIRDMVLELKSM) constitute a UVR domain.

Belongs to the UvrB family. As to quaternary structure, forms a heterotetramer with UvrA during the search for lesions. Interacts with UvrC in an incision complex.

The protein localises to the cytoplasm. Functionally, the UvrABC repair system catalyzes the recognition and processing of DNA lesions. A damage recognition complex composed of 2 UvrA and 2 UvrB subunits scans DNA for abnormalities. Upon binding of the UvrA(2)B(2) complex to a putative damaged site, the DNA wraps around one UvrB monomer. DNA wrap is dependent on ATP binding by UvrB and probably causes local melting of the DNA helix, facilitating insertion of UvrB beta-hairpin between the DNA strands. Then UvrB probes one DNA strand for the presence of a lesion. If a lesion is found the UvrA subunits dissociate and the UvrB-DNA preincision complex is formed. This complex is subsequently bound by UvrC and the second UvrB is released. If no lesion is found, the DNA wraps around the other UvrB subunit that will check the other stand for damage. The chain is UvrABC system protein B from Streptococcus thermophilus (strain CNRZ 1066).